We begin with the raw amino-acid sequence, 110 residues long: Period circadian protein (110 aa).

The interval 23-97 is disordered; that stretch reads VTNTSIAGTG…GGAGGGGGVT (75 aa). 12 repeat units span residues 30–31, 33–34, 36–37, 38–39, 40–41, 42–43, 44–45, 46–47, 48–49, 50–51, 52–53, and 54–55. Gly residues predominate over residues 30-63; that stretch reads GTGGTGGTGTGTGTGTGTGTGTGTGTDTGTGTGT. The tract at residues 30–79 is 24 X 2 AA approximate tandem repeats of G-T; the sequence is GTGGTGGTGTGTGTGTGTGTGTGTGTDTGTGTGTRNGTNSGTNSGTRTGT. A 13; approximate repeat occupies 56–57; that stretch reads DT. 3 consecutive repeat copies span residues 58 to 59, 60 to 61, and 62 to 63. The 17; approximate repeat unit spans residues 64–65; the sequence is RN. Positions 64–83 are enriched in low complexity; it reads RNGTNSGTNSGTRTGTASSY. The stretch at 66 to 67 is repeat 18; sequence GT. The 19; approximate repeat unit spans residues 68-69; it reads NS. Repeat unit 20 spans residues 70–71; sequence GT. One copy of the 21; approximate repeat lies at 72–73; it reads NS. The stretch at 74–75 is repeat 22; the sequence is GT. A 23; approximate repeat occupies 76-77; that stretch reads RT. Repeat 24 spans residues 78–79; it reads GT. Over residues 84 to 96 the composition is skewed to gly residues; the sequence is RGGGGGAGGGGGV.

Forms a heterodimer with timeless (TIM); the complex then translocates into the nucleus. Post-translationally, phosphorylated with a circadian rhythmicity, probably by the double-time protein (dbt). Phosphorylation could be implicated in the stability of per monomer and in the formation of heterodimer per-tim.

It localises to the nucleus. The protein resides in the cytoplasm. Its subcellular location is the perinuclear region. Essential for biological clock functions. Determines the period length of circadian and ultradian rhythms; an increase in PER dosage leads to shortened circadian rhythms and a decrease leads to lengthened circadian rhythms. Essential for the circadian rhythmicity of locomotor activity, eclosion behavior, and for the rhythmic component of the male courtship song that originates in the thoracic nervous system. The biological cycle depends on the rhythmic formation and nuclear localization of the TIM-PER complex. Light induces the degradation of TIM, which promotes elimination of PER. Nuclear activity of the heterodimer coordinatively regulates PER and TIM transcription through a negative feedback loop. Behaves as a negative element in circadian transcriptional loop. Does not appear to bind DNA, suggesting indirect transcriptional inhibition. This chain is Period circadian protein (per), found in Drosophila erecta (Fruit fly).